Here is a 1173-residue protein sequence, read N- to C-terminus: Pyruvate-flavodoxin oxidoreductase (1173 aa).

2 4Fe-4S ferredoxin-type domains span residues 681–710 (NVPVWQTDKCTQCNQCAFICPHAAIRPVLI) and 735–766 (YRLAVSPLDCSGCGNCADVCPVKGKALSMQPL). [4Fe-4S] cluster is bound by residues Cys-690, Cys-693, Cys-696, Cys-700, Cys-744, Cys-747, Cys-750, Cys-754, Cys-810, Cys-813, and Cys-838. The span at 922–933 (GEGTRERAEKVG) shows a compositional bias: basic and acidic residues. Residues 922–946 (GEGTRERAEKVGDTSGFANAREKSR) form a disordered region. Cys-1075 contacts [4Fe-4S] cluster.

Belongs to the pyruvate:ferredoxin/flavodoxin oxidoreductase family. It depends on [4Fe-4S] cluster as a cofactor.

The catalysed reaction is oxidized [flavodoxin] + pyruvate + CoA + 2 H(+) = reduced [flavodoxin] + acetyl-CoA + CO2. Its function is as follows. Oxidoreductase required for the transfer of electrons from pyruvate to flavodoxin, which reduces nitrogenase. This is Pyruvate-flavodoxin oxidoreductase (nifJ) from Enterobacter agglomerans (Erwinia herbicola).